Here is a 309-residue protein sequence, read N- to C-terminus: Carbamate kinase 2 (309 aa).

This sequence belongs to the carbamate kinase family.

The protein resides in the cytoplasm. The catalysed reaction is hydrogencarbonate + NH4(+) + ATP = carbamoyl phosphate + ADP + H2O + H(+). It functions in the pathway metabolic intermediate metabolism; carbamoyl phosphate degradation; CO(2) and NH(3) from carbamoyl phosphate: step 1/1. The protein is Carbamate kinase 2 (arcC2) of Staphylococcus epidermidis (strain ATCC 12228 / FDA PCI 1200).